Reading from the N-terminus, the 95-residue chain is Small ribosomal subunit protein uS17 (95 aa).

Belongs to the universal ribosomal protein uS17 family. As to quaternary structure, part of the 30S ribosomal subunit.

One of the primary rRNA binding proteins, it binds specifically to the 5'-end of 16S ribosomal RNA. In Phytoplasma australiense, this protein is Small ribosomal subunit protein uS17.